Here is a 454-residue protein sequence, read N- to C-terminus: Bifunctional protein GlmU (454 aa).

The segment at 1 to 226 (MSLEIVILAA…AMEVQGVNDR (226 aa)) is pyrophosphorylase. Residues 8–11 (LAAG), K22, Q73, 78–79 (GT), 99–101 (YGD), G136, E151, N166, and N224 contribute to the UDP-N-acetyl-alpha-D-glucosamine site. D101 provides a ligand contact to Mg(2+). A Mg(2+)-binding site is contributed by N224. The segment at 227–247 (MQQAQLERHYQRLRAEELMRQ) is linker. The interval 248 to 454 (GVTLLDPQRL…NWKRPEKIKK (207 aa)) is N-acetyltransferase. UDP-N-acetyl-alpha-D-glucosamine contacts are provided by R330 and K348. H360 acts as the Proton acceptor in catalysis. UDP-N-acetyl-alpha-D-glucosamine contacts are provided by Y363 and N374. Acetyl-CoA-binding positions include A377, 383-384 (NY), S402, A420, and R437.

This sequence in the N-terminal section; belongs to the N-acetylglucosamine-1-phosphate uridyltransferase family. In the C-terminal section; belongs to the transferase hexapeptide repeat family. Homotrimer. Mg(2+) serves as cofactor.

The protein resides in the cytoplasm. It carries out the reaction alpha-D-glucosamine 1-phosphate + acetyl-CoA = N-acetyl-alpha-D-glucosamine 1-phosphate + CoA + H(+). The catalysed reaction is N-acetyl-alpha-D-glucosamine 1-phosphate + UTP + H(+) = UDP-N-acetyl-alpha-D-glucosamine + diphosphate. It participates in nucleotide-sugar biosynthesis; UDP-N-acetyl-alpha-D-glucosamine biosynthesis; N-acetyl-alpha-D-glucosamine 1-phosphate from alpha-D-glucosamine 6-phosphate (route II): step 2/2. Its pathway is nucleotide-sugar biosynthesis; UDP-N-acetyl-alpha-D-glucosamine biosynthesis; UDP-N-acetyl-alpha-D-glucosamine from N-acetyl-alpha-D-glucosamine 1-phosphate: step 1/1. The protein operates within bacterial outer membrane biogenesis; LPS lipid A biosynthesis. Functionally, catalyzes the last two sequential reactions in the de novo biosynthetic pathway for UDP-N-acetylglucosamine (UDP-GlcNAc). The C-terminal domain catalyzes the transfer of acetyl group from acetyl coenzyme A to glucosamine-1-phosphate (GlcN-1-P) to produce N-acetylglucosamine-1-phosphate (GlcNAc-1-P), which is converted into UDP-GlcNAc by the transfer of uridine 5-monophosphate (from uridine 5-triphosphate), a reaction catalyzed by the N-terminal domain. This is Bifunctional protein GlmU from Pseudomonas aeruginosa (strain ATCC 15692 / DSM 22644 / CIP 104116 / JCM 14847 / LMG 12228 / 1C / PRS 101 / PAO1).